The primary structure comprises 137 residues: uncharacterized protein (137 aa).

5 helical membrane-spanning segments follow: residues 4 to 26 (AIIL…KIVC), 35 to 57 (IVVN…NIII), 62 to 84 (ILTY…YYAL), 89 to 111 (ASIV…ILFL), and 116 to 135 (TLPQ…LLSI). The EamA domain maps to 13–135 (VFYGVGTFFA…IIIGIILLSI (123 aa)).

Its subcellular location is the cell membrane. This is an uncharacterized protein from Methanocaldococcus jannaschii (strain ATCC 43067 / DSM 2661 / JAL-1 / JCM 10045 / NBRC 100440) (Methanococcus jannaschii).